Consider the following 258-residue polypeptide: UPF0328 protein ECU07_0060 (258 aa).

Belongs to the UPF0328 family.

This Encephalitozoon cuniculi (strain GB-M1) (Microsporidian parasite) protein is UPF0328 protein ECU07_0060.